A 579-amino-acid polypeptide reads, in one-letter code: uncharacterized protein (579 aa).

The protein belongs to the UbiD family.

This is an uncharacterized protein from Chlamydia trachomatis serovar D (strain ATCC VR-885 / DSM 19411 / UW-3/Cx).